The primary structure comprises 176 residues: CDP-archaeol synthase (176 aa).

The next 5 helical transmembrane spans lie at 12–32 (FIYW…SPVL), 60–80 (GFYV…IILC), 85–105 (ILIG…GSFI), 118–138 (PIID…FLGI), and 141–161 (FISY…LHII).

Belongs to the CDP-archaeol synthase family. Mg(2+) serves as cofactor.

The protein localises to the cell membrane. It carries out the reaction 2,3-bis-O-(geranylgeranyl)-sn-glycerol 1-phosphate + CTP + H(+) = CDP-2,3-bis-O-(geranylgeranyl)-sn-glycerol + diphosphate. It functions in the pathway membrane lipid metabolism; glycerophospholipid metabolism. In terms of biological role, catalyzes the formation of CDP-2,3-bis-(O-geranylgeranyl)-sn-glycerol (CDP-archaeol) from 2,3-bis-(O-geranylgeranyl)-sn-glycerol 1-phosphate (DGGGP) and CTP. This reaction is the third ether-bond-formation step in the biosynthesis of archaeal membrane lipids. This Staphylothermus marinus (strain ATCC 43588 / DSM 3639 / JCM 9404 / F1) protein is CDP-archaeol synthase.